The chain runs to 232 residues: Membrane steroid-binding protein 1 (232 aa).

The helical transmembrane segment at 25–45 (AAFFTAVAAAAALYHVVSGIF) threads the bilayer. Disordered regions lie at residues 48–77 (PPPP…VSEE) and 172–232 (TVPV…AKES). A Cytochrome b5 heme-binding domain is found at 71–170 (LGEVSEEELR…GKYVKVGTVK (100 aa)). The tract at residues 73 to 170 (EVSEEELRQY…GKYVKVGTVK (98 aa)) is steroid-binding. Over residues 179–193 (APSTSPETTETAAAA) the composition is skewed to low complexity. The span at 194–219 (EPEKAPATEEKPREVSSEEVKEKEDA) shows a compositional bias: basic and acidic residues.

This sequence belongs to the cytochrome b5 family. MAPR subfamily. As to quaternary structure, interacts with SERL2. As to expression, expressed in leaf sheaths, leaf blades and panicles.

It localises to the cell membrane. Its function is as follows. Binds multiple steroid compounds. May act as a coreceptor with SERL2 and enhance its endocytosis. This is Membrane steroid-binding protein 1 from Oryza sativa subsp. japonica (Rice).